A 201-amino-acid polypeptide reads, in one-letter code: Small ribosomal subunit protein uS4 (201 aa).

The disordered stretch occupies residues 19–41 (LVGGSSAYEKRPYPPGQHGRARI). The region spanning 91–157 (SRLDNVVYRA…LPFEVARETA (67 aa)) is the S4 RNA-binding domain.

This sequence belongs to the universal ribosomal protein uS4 family. In terms of assembly, part of the 30S ribosomal subunit. Contacts protein S5. The interaction surface between S4 and S5 is involved in control of translational fidelity.

Its function is as follows. One of the primary rRNA binding proteins, it binds directly to 16S rRNA where it nucleates assembly of the body of the 30S subunit. In terms of biological role, with S5 and S12 plays an important role in translational accuracy. The sequence is that of Small ribosomal subunit protein uS4 from Mycobacteroides abscessus (strain ATCC 19977 / DSM 44196 / CCUG 20993 / CIP 104536 / JCM 13569 / NCTC 13031 / TMC 1543 / L948) (Mycobacterium abscessus).